A 60-amino-acid polypeptide reads, in one-letter code: MNDYKLYQCAQCGFEYDEAVGWPEDGIEPGTRWDDIPEDWSCPDCGAAKSDFFMVEVERR.

Residues 4 to 55 form the Rubredoxin-like domain; sequence YKLYQCAQCGFEYDEAVGWPEDGIEPGTRWDDIPEDWSCPDCGAAKSDFFMV. Cys-9, Cys-12, Cys-42, and Cys-45 together coordinate Fe cation.

It belongs to the rubredoxin family. Fe(3+) serves as cofactor.

Involved in the hydrocarbon hydroxylating system, which transfers electrons from NADH to rubredoxin reductase and then through rubredoxin to alkane 1 monooxygenase. The sequence is that of Rubredoxin 4 (rubA4) from Rhodococcus sp. (strain Q15).